The chain runs to 345 residues: Heat stress transcription factor A-4c (345 aa).

A DNA-binding region spans residues 11-105 (LPPFLTKTYE…LMKNIHRRKP (95 aa)). Positions 119–185 (PLTESERRSM…SIVAYVSQVL (67 aa)) are hydrophobic repeat HR-A/B. Positions 199-203 (RRKRR) match the Nuclear localization signal motif. The AHA1 motif lies at 226 to 235 (LTFWENLVSE). A disordered region spans residues 240-329 (SGLQSSSMDH…NGNKIGNQRT (90 aa)). A compositionally biased stretch (low complexity) spans 274–283 (PPVTVTAPAP). The AHA2 motif lies at 289-298 (DDFWEQCLTE). Polar residues-rich tracts occupy residues 296–308 (LTEN…QQEV) and 317–329 (NDNN…NQRT).

This sequence belongs to the HSF family. Class A subfamily. Homotrimer. Post-translationally, exhibits temperature-dependent phosphorylation. In terms of tissue distribution, expressed in roots, seedlings and at lower levels in leaves.

The protein localises to the nucleus. Its function is as follows. Transcriptional activator that specifically binds DNA sequence 5'-AGAAnnTTCT-3' known as heat shock promoter elements (HSE). May be involved in general response to auxin. The polypeptide is Heat stress transcription factor A-4c (HSFA4C) (Arabidopsis thaliana (Mouse-ear cress)).